We begin with the raw amino-acid sequence, 108 residues long: Envelope small membrane protein (108 aa).

Topologically, residues 1-10 (MNLLNKSLEE) are virion surface. Residues 11 to 31 (NGSFLTALYIIVGFLALYLLG) traverse the membrane as a helical segment. The Intravirion segment spans residues 32–108 (RALQAFVQAA…QDAQRDKLYS (77 aa)). The interval 88 to 108 (NGWNNKNPANFQDAQRDKLYS) is disordered. The segment covering 89 to 100 (GWNNKNPANFQD) has biased composition (polar residues).

The protein belongs to the gammacoronaviruses E protein family. In terms of assembly, homooligomer. Interacts with the M membrane protein in the budding compartment of the host cell, which is located between endoplasmic reticulum and the Golgi complex. The cytoplasmic tails of both proteins are important for this function. Interacts with Nucleoprotein.

It is found in the host Golgi apparatus membrane. Its function is as follows. Plays a central role in virus morphogenesis and assembly. Acts as a viroporin and self-assembles in host membranes forming pentameric protein-lipid pores that allow ion transport. Also plays a role in the induction of apoptosis. The polypeptide is Envelope small membrane protein (Gallus gallus (Chicken)).